Here is a 679-residue protein sequence, read N- to C-terminus: E3 ubiquitin ligase RNF157 (679 aa).

Gly-2 carries N-myristoyl glycine lipidation. An RING-type zinc finger spans residues 277–316 (CVVCLSDVRDTLILPCRHLCLCNTCADTLRYQANNCPICR). The D-box 1 motif lies at 329–332 (RKKL). 2 stretches are compositionally biased toward polar residues: residues 339–349 (SFNPIISSQTS) and 478–537 (ESEN…SMSG). Disordered stretches follow at residues 339 to 362 (SFNP…NIPP), 416 to 604 (LDRL…TQEG), and 650 to 679 (VSRN…PLAV). Residues 585 to 598 (QDAEGNDVIEEEDG) are compositionally biased toward acidic residues. The D-box 2 signature appears at 656-659 (RRRL). Phosphoserine is present on residues Ser-660, Ser-661, Ser-662, and Ser-663.

Interacts with APBB1. Interacts with CHD1; CHD1-binding controls RNF157 stability. Interacts with ATRN, MEGF8, TECR, MSI2, PLRG1, BYSL, MTERF3, PSMA1, MRPS18B, PRPF4, FASTKD2, SLC25A1, SMU1, CNOT9, MRPS2, MAGT1, FXR2, EMD, PSMD8, HDAC1, RAN, HSD17B12, TXNDC5 and MRPL19. In terms of processing, phosphorylation at Ser-660, Ser-661, Ser-662 and Ser-663 downstream of the PI3K and MAPK pathways influences the E3 ligase activity and stability of RNF157 during the cell cycle in an anaphase-promoting complex/cyclosome-CDH1-dependent manner.

Its subcellular location is the cytoplasm. The catalysed reaction is S-ubiquitinyl-[E2 ubiquitin-conjugating enzyme]-L-cysteine + [acceptor protein]-L-lysine = [E2 ubiquitin-conjugating enzyme]-L-cysteine + N(6)-ubiquitinyl-[acceptor protein]-L-lysine.. E3 ubiquitin ligase that ubiquitinates APBB1 for its degradation by the proteasome and thus prevents apoptosis and promotes survival of neurons. Has a dual role in neurons as it is also required for dendrite growth and maintenance for which its ligase activity is not critical. May act as a scaffold molecule to regulate this process. Acts as a downstream effector of the interconnected PI3K and MAPK signaling pathways and thus participates in the regulation of the cell cycle. This chain is E3 ubiquitin ligase RNF157 (RNF157), found in Homo sapiens (Human).